The sequence spans 1393 residues: DNA-directed RNA polymerase subunit beta' (1393 aa).

C72, C74, C87, and C90 together coordinate Zn(2+). Mg(2+)-binding residues include D463, D465, and D467. Zn(2+)-binding residues include C812, C887, C894, and C897.

This sequence belongs to the RNA polymerase beta' chain family. In terms of assembly, the RNAP catalytic core consists of 2 alpha, 1 beta, 1 beta' and 1 omega subunit. When a sigma factor is associated with the core the holoenzyme is formed, which can initiate transcription. It depends on Mg(2+) as a cofactor. Zn(2+) is required as a cofactor.

The catalysed reaction is RNA(n) + a ribonucleoside 5'-triphosphate = RNA(n+1) + diphosphate. Functionally, DNA-dependent RNA polymerase catalyzes the transcription of DNA into RNA using the four ribonucleoside triphosphates as substrates. This Chlamydia felis (strain Fe/C-56) (Chlamydophila felis) protein is DNA-directed RNA polymerase subunit beta'.